The sequence spans 643 residues: Threonine--tRNA ligase (643 aa).

The 61-residue stretch at 1 to 61 folds into the TGS domain; the sequence is MPIITLPDGS…SEDSSLEIIT (61 aa). A catalytic region spans residues 243–534; the sequence is DHRRIGKALD…ITEEYAGFFP (292 aa). The Zn(2+) site is built by Cys334, His385, and His511.

This sequence belongs to the class-II aminoacyl-tRNA synthetase family. As to quaternary structure, homodimer. Requires Zn(2+) as cofactor.

The protein localises to the cytoplasm. The catalysed reaction is tRNA(Thr) + L-threonine + ATP = L-threonyl-tRNA(Thr) + AMP + diphosphate + H(+). Catalyzes the attachment of threonine to tRNA(Thr) in a two-step reaction: L-threonine is first activated by ATP to form Thr-AMP and then transferred to the acceptor end of tRNA(Thr). Also edits incorrectly charged L-seryl-tRNA(Thr). The protein is Threonine--tRNA ligase of Actinobacillus pleuropneumoniae serotype 5b (strain L20).